Consider the following 1094-residue polypeptide: Protein phosphatase 2C and cyclic nucleotide-binding/kinase domain-containing protein (1094 aa).

Positions 107–397 constitute a PPM-type phosphatase domain; that stretch reads RCSFLSQRGY…DDITIIVVHI (291 aa). Residues Asp-148, Gly-149, Asp-344, and Asp-388 each contribute to the Mn(2+) site. Residues 491-616 and 617-758 contribute to the a nucleoside 3',5'-cyclic phosphate site; these read LFRK…RSVD and LLSR…RHSS. One can recognise a Protein kinase domain in the interval 785–1038; sequence TTCLSTTDCS…PESIKKHPWF (254 aa). Residues 791–799 and Lys-811 each bind ATP; that span reads TDCSEIGLV.

It in the N-terminal section; belongs to the PP2C family. In the C-terminal section; belongs to the protein kinase superfamily. AGC Ser/Thr protein kinase family. Mg(2+) serves as cofactor. Mn(2+) is required as a cofactor.

It carries out the reaction O-phospho-L-seryl-[protein] + H2O = L-seryl-[protein] + phosphate. The catalysed reaction is O-phospho-L-threonyl-[protein] + H2O = L-threonyl-[protein] + phosphate. The sequence is that of Protein phosphatase 2C and cyclic nucleotide-binding/kinase domain-containing protein from Arabidopsis thaliana (Mouse-ear cress).